The following is a 317-amino-acid chain: UV DNA damage endonuclease (317 aa).

The protein belongs to the uve1/UvsE family.

Component in a DNA repair pathway. Removal of UV LIGHT damaged nucleotides. Recognizes pyrimidine dimers and cleave a phosphodiester bond immediately 5' to the lesion. The protein is UV DNA damage endonuclease of Bacillus anthracis (strain A0248).